The primary structure comprises 314 residues: tRNA pseudouridine synthase B (314 aa).

Histidine 43 contacts substrate. Catalysis depends on aspartate 48, which acts as the Nucleophile. Residues tyrosine 76, tyrosine 179, and leucine 200 each coordinate substrate.

Belongs to the pseudouridine synthase TruB family. Type 1 subfamily.

The enzyme catalyses uridine(55) in tRNA = pseudouridine(55) in tRNA. Functionally, responsible for synthesis of pseudouridine from uracil-55 in the psi GC loop of transfer RNAs. The sequence is that of tRNA pseudouridine synthase B from Salmonella choleraesuis (strain SC-B67).